Reading from the N-terminus, the 180-residue chain is Inner membrane-spanning protein YciB (180 aa).

The next 6 membrane-spanning stretches (helical) occupy residues 4 to 24 (LLSE…GGGI), 25 to 45 (QHAT…CYVI), 49 to 69 (VSKL…ITLI), 76 to 96 (IKIK…MSGI), 118 to 138 (ITLS…NEVV), and 150 to 170 (FKVF…LPLL).

The protein belongs to the YciB family.

It is found in the cell inner membrane. Functionally, plays a role in cell envelope biogenesis, maintenance of cell envelope integrity and membrane homeostasis. The polypeptide is Inner membrane-spanning protein YciB (Rickettsia africae (strain ESF-5)).